Here is a 104-residue protein sequence, read N- to C-terminus: DNA-directed RNA polymerase subunit Rpo13 (104 aa).

Disordered stretches follow at residues 1–33 and 78–104; these read MVSG…EDEF and RDSR…SVEG. The span at 7 to 31 shows a compositional bias: acidic residues; it reads TDEEKEGTSDEEVNEEKEVEETSED. Residues 80 to 104 show a composition bias toward basic residues; that stretch reads SRRKAKKAVSKKVKKTKKKEKSVEG.

This sequence belongs to the archaeal Rpo13 RNA polymerase subunit family. Part of the 13-subunit RNA polymerase complex.

The protein resides in the cytoplasm. The enzyme catalyses RNA(n) + a ribonucleoside 5'-triphosphate = RNA(n+1) + diphosphate. Its function is as follows. DNA-dependent RNA polymerase (RNAP) catalyzes the transcription of DNA into RNA using the four ribonucleoside triphosphates as substrates. Probably binds dsDNA. The polypeptide is DNA-directed RNA polymerase subunit Rpo13 (Saccharolobus solfataricus (strain ATCC 35092 / DSM 1617 / JCM 11322 / P2) (Sulfolobus solfataricus)).